The following is a 452-amino-acid chain: Trigger factor (452 aa).

The PPIase FKBP-type domain maps to 171–256; the sequence is GDRVTISFKG…ATKVEAPQDT (86 aa).

The protein belongs to the FKBP-type PPIase family. Tig subfamily.

It is found in the cytoplasm. It carries out the reaction [protein]-peptidylproline (omega=180) = [protein]-peptidylproline (omega=0). Involved in protein export. Acts as a chaperone by maintaining the newly synthesized protein in an open conformation. Functions as a peptidyl-prolyl cis-trans isomerase. The sequence is that of Trigger factor from Rhodopseudomonas palustris (strain HaA2).